Consider the following 80-residue polypeptide: U1-nemetoxin-Csp1a (80 aa).

The N-terminal stretch at 1–20 (MKYFVVFCVLIIAVAAFTSA) is a signal peptide. The propeptide occupies 21-41 (AEDGEVFEENPLEFPKTIQKR). 4 disulfides stabilise this stretch: Cys-42–Cys-56, Cys-49–Cys-60, Cys-55–Cys-77, and Cys-66–Cys-73.

This sequence belongs to the neurotoxin 13 (insecticidal toxin ABC) family. 02 (Calisoga) subfamily. Expressed by the venom gland.

It localises to the secreted. In terms of biological role, causes paralysis to insect larvae (H.virescens). This toxin is active only on insects. The protein is U1-nemetoxin-Csp1a of Calisoga sp. (Spider).